We begin with the raw amino-acid sequence, 97 residues long: Large ribosomal subunit protein bL28 (97 aa).

It belongs to the bacterial ribosomal protein bL28 family.

This is Large ribosomal subunit protein bL28 from Sphingopyxis alaskensis (strain DSM 13593 / LMG 18877 / RB2256) (Sphingomonas alaskensis).